Consider the following 420-residue polypeptide: Glutamate dehydrogenase (420 aa).

Lys-105 is an active-site residue. 220–226 (GYGNAGY) serves as a coordination point for NAD(+).

It belongs to the Glu/Leu/Phe/Val dehydrogenases family. Homohexamer.

It is found in the cytoplasm. The enzyme catalyses L-glutamate + NAD(+) + H2O = 2-oxoglutarate + NH4(+) + NADH + H(+). It catalyses the reaction L-glutamate + NADP(+) + H2O = 2-oxoglutarate + NH4(+) + NADPH + H(+). This chain is Glutamate dehydrogenase (gdhA), found in Pyrococcus endeavori.